The primary structure comprises 470 residues: GTPase Der (470 aa).

EngA-type G domains lie at 2–165 (KTIA…GLEA) and 201–372 (IRVG…ENFS). Residues 8 to 15 (GKPNVGKS), 55 to 59 (DTGGI), 117 to 120 (NKID), 207 to 214 (GKVNVGKS), 254 to 258 (DTAGI), and 318 to 321 (NKWD) each bind GTP. The KH-like domain maps to 373-457 (RRIPTSILNK…PILIRARKRG (85 aa)).

This sequence belongs to the TRAFAC class TrmE-Era-EngA-EngB-Septin-like GTPase superfamily. EngA (Der) GTPase family. As to quaternary structure, associates with the 50S ribosomal subunit.

Its function is as follows. GTPase that plays an essential role in the late steps of ribosome biogenesis. In Wolinella succinogenes (strain ATCC 29543 / DSM 1740 / CCUG 13145 / JCM 31913 / LMG 7466 / NCTC 11488 / FDC 602W) (Vibrio succinogenes), this protein is GTPase Der.